Here is a 669-residue protein sequence, read N- to C-terminus: MIAKPNQATTEPPLSLRPGTVPTVPATTPARPATITIQRRHPAPKADSTPHTLPPFSPSPSPASSPSPAPAQTPGAQKTQSQAAITHPAAVASPSAPVAAAAPKTPKTPEPRSTHTHTHTHSQHFSPPPRESEMDGERSPSHSGHEMTLSMDGIDSSLVFGSARVPVNSSTPYSDATRTKKHSPGHIKRPMNAFMVWSQMERRKICERTPDLHNAEISKELGRRWQLLSKDDKQPYIIEAEKLRKLHMIEYPNYKYRPQKKQTRSPGSLKPNQDADGCEARNDTTNNNNSLTTLAINGTTTAGRKSKRSTSTCQSGSASKRLRNDSGDTSSKPKYEVKMESAEQLNSADIILPSADNLISYQSSEYLPLSTLSNADCDEKLHSELSSGPLESRENLSEVVNRFLPLFLGGNEDSQLGVSSLTQSQHNQSDPTAGLMDNISDISPINDREELTEEVMRYLPYLEVNPSSDGLTLKVESSSLLGKPLNEPVFDSEDNIVNDANLHSASHQIPPYVPDSHDCFAEDCGGDSSSHQVEFEVVRPQTVTMTMTCTLPYGGPDAGHTTFQADDFNAIPSAAEDSECSILTTSNSPQIGFNGSSFVEADAIGSTCTYAQQDYTGSVIETHNDLNYAAHDNNGALLAYTFEDLPPQPTGSHLEFNTNKYEFASYYKM.

Positions 1–12 (MIAKPNQATTEP) are enriched in polar residues. 3 disordered regions span residues 1-149 (MIAK…EMTL), 254-336 (YKYR…PKYE), and 419-439 (SSLTQSQHNQSDPTAGLMDNI). A compositionally biased stretch (low complexity) spans 17–37 (RPGTVPTVPATTPARPATITI). Over residues 52-71 (TLPPFSPSPSPASSPSPAPA) the composition is skewed to pro residues. Residues 75-84 (GAQKTQSQAA) are compositionally biased toward polar residues. Over residues 88-105 (PAAVASPSAPVAAAAPKT) the composition is skewed to low complexity. The span at 130–145 (RESEMDGERSPSHSGH) shows a compositional bias: basic and acidic residues. Positions 187-255 (IKRPMNAFMV…LHMIEYPNYK (69 aa)) form a DNA-binding region, HMG box. The span at 284 to 294 (TTNNNNSLTTL) shows a compositional bias: low complexity. A compositionally biased stretch (polar residues) spans 295-318 (AINGTTTAGRKSKRSTSTCQSGSA). A compositionally biased stretch (basic and acidic residues) spans 322–336 (LRNDSGDTSSKPKYE). Residues 419-431 (SSLTQSQHNQSDP) show a composition bias toward polar residues.

It is found in the nucleus. The sequence is that of Putative transcription factor SOX-14 (Sox14) from Drosophila melanogaster (Fruit fly).